Reading from the N-terminus, the 431-residue chain is Argininosuccinate lyase (431 aa).

This sequence belongs to the lyase 1 family. Argininosuccinate lyase subfamily.

The protein localises to the cytoplasm. The catalysed reaction is 2-(N(omega)-L-arginino)succinate = fumarate + L-arginine. The protein operates within amino-acid biosynthesis; L-arginine biosynthesis; L-arginine from L-ornithine and carbamoyl phosphate: step 3/3. The chain is Argininosuccinate lyase from Stenotrophomonas maltophilia (strain K279a).